A 115-amino-acid chain; its full sequence is Synaptobrevin homolog 2 (115 aa).

Positions 1-16 (MSSSVPYDPYVPPEES) are enriched in low complexity. Residues 1 to 28 (MSSSVPYDPYVPPEESNSGANPNSQNKT) form a disordered region. Residues 1-93 (MSSSVPYDPY…MWWKDLKMRM (93 aa)) lie on the Cytoplasmic side of the membrane. The span at 17–28 (NSGANPNSQNKT) shows a compositional bias: polar residues. In terms of domain architecture, v-SNARE coiled-coil homology spans 27-87 (KTAALRQEID…NRVRKQMWWK (61 aa)). Ser58 is subject to Phosphoserine. Lys62 is covalently cross-linked (Glycyl lysine isopeptide (Lys-Gly) (interchain with G-Cter in ubiquitin)). The S-palmitoyl cysteine moiety is linked to residue Cys94. The helical; Anchor for type IV membrane protein transmembrane segment at 94–112 (CLFLVVIILLVVIIVPIVV) threads the bilayer. Residues 113–115 (HFS) are Vesicular-facing.

It belongs to the synaptobrevin family. Post-translationally, palmitoylated by SWF1.

It localises to the endomembrane system. Its function is as follows. SNC1 and SNC2 are vesicle-targeting proteins essential for normal secretory traffic between the Golgi and the plasma membrane. They may also be involved in vesicle fusion. The protein is Synaptobrevin homolog 2 (SNC2) of Saccharomyces cerevisiae (strain ATCC 204508 / S288c) (Baker's yeast).